The chain runs to 261 residues: Cytochrome c oxidase subunit 3 (261 aa).

Over 1–15 (MTHQTHAYHMVNPSP) the chain is Mitochondrial matrix. A helical membrane pass occupies residues 16–34 (WPLTGALSALLMTSGLIMW). Over 35–40 (FHFNSV) the chain is Mitochondrial intermembrane. Residues 41-66 (ALLTLGLTTNMLTMYQWWRDVIREST) traverse the membrane as a helical segment. Topologically, residues 67–72 (FQGHHT) are mitochondrial matrix. A helical membrane pass occupies residues 73–105 (PNVQKGLRYGMILFIISEVLFFTGFFWAFYHSS). The Mitochondrial intermembrane portion of the chain corresponds to 106-128 (LAPTPELGGCWPPTGIHPLNPLE). Residues 129–152 (VPLLNTSVLLASGVSITWAHHSLM) form a helical membrane-spanning segment. The Mitochondrial matrix segment spans residues 153-155 (EGN). Residues 156–183 (RNHMLQALFITIALGVYFTLLQASEYYE) traverse the membrane as a helical segment. Topologically, residues 184 to 190 (APFTISD) are mitochondrial intermembrane. The chain crosses the membrane as a helical span at residues 191–223 (GVYGSTFFVATGFHGLHVIIGSTFLIVCFFRQL). At 224–232 (KFHFTSSHH) the chain is on the mitochondrial matrix side. Residues 233–256 (FGFEAAAWYWHFVDVVWLFLYVSI) traverse the membrane as a helical segment. The Mitochondrial intermembrane portion of the chain corresponds to 257-261 (YWWGS).

It belongs to the cytochrome c oxidase subunit 3 family. In terms of assembly, component of the cytochrome c oxidase (complex IV, CIV), a multisubunit enzyme composed of 14 subunits. The complex is composed of a catalytic core of 3 subunits MT-CO1, MT-CO2 and MT-CO3, encoded in the mitochondrial DNA, and 11 supernumerary subunits COX4I, COX5A, COX5B, COX6A, COX6B, COX6C, COX7A, COX7B, COX7C, COX8 and NDUFA4, which are encoded in the nuclear genome. The complex exists as a monomer or a dimer and forms supercomplexes (SCs) in the inner mitochondrial membrane with NADH-ubiquinone oxidoreductase (complex I, CI) and ubiquinol-cytochrome c oxidoreductase (cytochrome b-c1 complex, complex III, CIII), resulting in different assemblies (supercomplex SCI(1)III(2)IV(1) and megacomplex MCI(2)III(2)IV(2)).

It is found in the mitochondrion inner membrane. The enzyme catalyses 4 Fe(II)-[cytochrome c] + O2 + 8 H(+)(in) = 4 Fe(III)-[cytochrome c] + 2 H2O + 4 H(+)(out). In terms of biological role, component of the cytochrome c oxidase, the last enzyme in the mitochondrial electron transport chain which drives oxidative phosphorylation. The respiratory chain contains 3 multisubunit complexes succinate dehydrogenase (complex II, CII), ubiquinol-cytochrome c oxidoreductase (cytochrome b-c1 complex, complex III, CIII) and cytochrome c oxidase (complex IV, CIV), that cooperate to transfer electrons derived from NADH and succinate to molecular oxygen, creating an electrochemical gradient over the inner membrane that drives transmembrane transport and the ATP synthase. Cytochrome c oxidase is the component of the respiratory chain that catalyzes the reduction of oxygen to water. Electrons originating from reduced cytochrome c in the intermembrane space (IMS) are transferred via the dinuclear copper A center (CU(A)) of subunit 2 and heme A of subunit 1 to the active site in subunit 1, a binuclear center (BNC) formed by heme A3 and copper B (CU(B)). The BNC reduces molecular oxygen to 2 water molecules using 4 electrons from cytochrome c in the IMS and 4 protons from the mitochondrial matrix. The sequence is that of Cytochrome c oxidase subunit 3 (MT-CO3) from Nanger dama (Dama gazelle).